The chain runs to 66 residues: Beta-mammal toxin Cv3 (66 aa).

In terms of domain architecture, LCN-type CS-alpha/beta spans 1-66; the sequence is KEGYIVNYYD…VWPLPNKTCN (66 aa). Intrachain disulfides connect cysteine 12-cysteine 65, cysteine 16-cysteine 41, cysteine 25-cysteine 46, and cysteine 29-cysteine 48.

As to expression, expressed by the venom gland.

It is found in the secreted. Its function is as follows. Beta toxins bind voltage-independently at site-4 of sodium channels (Nav) and reduces peak current and shifts the voltage of activation toward more negative potentials thereby affecting sodium channel activation and promoting spontaneous and repetitive firing. This toxin is strongly toxic to mice. The sequence is that of Beta-mammal toxin Cv3 from Centruroides villegasi (Scorpion).